A 230-amino-acid chain; its full sequence is UPF0173 metal-dependent hydrolase Sca_1312 (230 aa).

The protein belongs to the UPF0173 family.

This Staphylococcus carnosus (strain TM300) protein is UPF0173 metal-dependent hydrolase Sca_1312.